The chain runs to 233 residues: Protein Mis18-alpha (233 aa).

Phosphoserine occurs at positions 36, 39, and 40. Residues 80–178 (PLVFLCSGCR…SVEAIESYVL (99 aa)) enclose the Mis18 domain. Zn(2+)-binding residues include Cys-85, Cys-88, Cys-141, and Cys-144. Lys-162 is covalently cross-linked (Glycyl lysine isopeptide (Lys-Gly) (interchain with G-Cter in SUMO2)). Ser-233 carries the phosphoserine modification.

The protein belongs to the mis18 family. In terms of assembly, homodimer, and heterodimer with OIP5/MIS18B. Identified in a complex containing MIS18A, OIP5/MIS18B, MIS18BP1, RBBP7 and RBBP4. In terms of tissue distribution, detected in testis.

Its subcellular location is the nucleus. The protein localises to the chromosome. The protein resides in the centromere. Required for recruitment of CENPA to centromeres and normal chromosome segregation during mitosis. This chain is Protein Mis18-alpha (MIS18A), found in Homo sapiens (Human).